The sequence spans 521 residues: MIPVSLVVVVVGGWTVVYLTDLVLKSSVYFKHSYEDWLESNGLSISPFHIRWQTAVFNRAFYSWGRRKARMLYQWFNFGMVFGVIAMFSSFFLLGKTLMQTLAQMMADSPSSYSSSSSSSSSSSSSSSSSSSSSSSSSLHNEQVLQVVVPGINLPVNQLTYFFAAVLISGVVHEIGHGIAAIREQVRFNGFGIFLFIIYPGAFVDLFTTHLQLISPVQQLRIFCAGIWHNFVLALLGILALVLLPVILLPFYYTGVGVLITEVAEDSPAIGPRGLFVGDLVTHLQDCPVTNVQDWNECLDTIAYEPQIGYCISASTLQQLSFPVRAYKRLDGSTECCNNHSLTDVCFSYRNNFNKRLHTCLPARKAVEATQVCRTNKDCKKSSSSSFCIIPSLETHTRLIKVKHPPQIDMLYVGHPLHLHYTVSITSFIPRFNFLSIDLPVVVETFVKYLISLSGALAIVNAVPCFALDGQWILNSFLDATLTSVIGDNDVKDLIGFFILLGGSVLLAANVTLGLWMVTAR.

Residues 1-3 (MIP) are Cytoplasmic-facing. The helical transmembrane segment at 4–24 (VSLVVVVVGGWTVVYLTDLVL) threads the bilayer. Residues 25 to 74 (KSSVYFKHSYEDWLESNGLSISPFHIRWQTAVFNRAFYSWGRRKARMLYQ) lie on the Lumenal side of the membrane. 2 consecutive transmembrane segments (helical) span residues 75-95 (WFNFGMVFGVIAMFSSFFLLG) and 96-107 (KTLMQTLAQMMA). The Lumenal segment spans residues 108-146 (DSPSSYSSSSSSSSSSSSSSSSSSSSSSSSSLHNEQVLQ). Residues 113 to 137 (YSSSSSSSSSSSSSSSSSSSSSSSS) form a disordered region. A helical membrane pass occupies residues 147-171 (VVVPGINLPVNQLTYFFAAVLISGV). His-173 serves as a coordination point for Zn(2+). Glu-174 is an active-site residue. The next 3 membrane-spanning stretches (helical) occupy residues 176 to 188 (GHGIAAIREQVRF), 189 to 211 (NGFGIFLFIIYPGAFVDLFTTHL), and 231 to 253 (FVLALLGILALVLLPVILLPFYY). His-177 contributes to the Zn(2+) binding site. The Lumenal segment spans residues 254-448 (TGVGVLITEV…LPVVVETFVK (195 aa)). An N-linked (GlcNAc...) asparagine glycan is attached at Asn-339. 2 consecutive transmembrane segments (helical) span residues 449-466 (YLISLSGALAIVNAVPCF) and 467-478 (ALDGQWILNSFL). The Lumenal portion of the chain corresponds to 479 to 494 (DATLTSVIGDNDVKDL). The chain crosses the membrane as a helical span at residues 495–515 (IGFFILLGGSVLLAANVTLGL). At 516–521 (WMVTAR) the chain is on the cytoplasmic side.

Belongs to the peptidase M50A family. It depends on Zn(2+) as a cofactor.

The protein resides in the membrane. It localises to the cytoplasm. Its subcellular location is the golgi apparatus membrane. The catalysed reaction is Cleaves several transcription factors that are type-2 transmembrane proteins within membrane-spanning domains. Known substrates include sterol regulatory element-binding protein (SREBP) -1, SREBP-2 and forms of the transcriptional activator ATF6. SREBP-2 is cleaved at the site 477-DRSRILL-|-CVLTFLCLSFNPLTSLLQWGGA-505. The residues Asn-Pro, 11 residues distal to the site of cleavage in the membrane-spanning domain, are important for cleavage by S2P endopeptidase. Replacement of either of these residues does not prevent cleavage, but there is no cleavage if both of these residues are replaced.. Functionally, zinc metalloprotease that mediates intramembrane proteolysis of proteins such as ATF6, ATF6B, SREBF1/SREBP1 and SREBF2/SREBP2. Catalyzes the second step in the proteolytic activation of the sterol regulatory element-binding proteins (SREBPs) SREBF1/SREBP1 and SREBF2/SREBP2: cleaves SREBPs within the first transmembrane segment, thereby releasing the N-terminal segment with a portion of the transmembrane segment attached. Mature N-terminal SREBP fragments shuttle to the nucleus and activate gene transcription. Also mediates the second step in the proteolytic activation of the cyclic AMP-dependent transcription factor ATF-6 (ATF6 and ATF6B). Involved in intramembrane proteolysis during bone formation. In astrocytes and osteoblasts, upon DNA damage and ER stress, mediates the second step of the regulated intramembrane proteolytic activation of the transcription factor CREB3L1, leading to the inhibition of cell-cycle progression. The sequence is that of Membrane-bound transcription factor site-2 protease (MBTPS2) from Pongo abelii (Sumatran orangutan).